Reading from the N-terminus, the 196-residue chain is Nucleoside triphosphate pyrophosphatase (196 aa).

Asp73 acts as the Proton acceptor in catalysis.

The protein belongs to the Maf family. Requires a divalent metal cation as cofactor.

The protein resides in the cytoplasm. It carries out the reaction a ribonucleoside 5'-triphosphate + H2O = a ribonucleoside 5'-phosphate + diphosphate + H(+). The catalysed reaction is a 2'-deoxyribonucleoside 5'-triphosphate + H2O = a 2'-deoxyribonucleoside 5'-phosphate + diphosphate + H(+). Functionally, nucleoside triphosphate pyrophosphatase. May have a dual role in cell division arrest and in preventing the incorporation of modified nucleotides into cellular nucleic acids. This chain is Nucleoside triphosphate pyrophosphatase, found in Anaplasma marginale (strain Florida).